A 150-amino-acid chain; its full sequence is Deoxyuridine 5'-triphosphate nucleotidohydrolase (150 aa).

Residues 69 to 71 (RSG), N82, 86 to 88 (LID), and M96 each bind substrate.

It belongs to the dUTPase family. Mg(2+) is required as a cofactor.

The catalysed reaction is dUTP + H2O = dUMP + diphosphate + H(+). Its pathway is pyrimidine metabolism; dUMP biosynthesis; dUMP from dCTP (dUTP route): step 2/2. In terms of biological role, this enzyme is involved in nucleotide metabolism: it produces dUMP, the immediate precursor of thymidine nucleotides and it decreases the intracellular concentration of dUTP so that uracil cannot be incorporated into DNA. The polypeptide is Deoxyuridine 5'-triphosphate nucleotidohydrolase (Acinetobacter baumannii (strain AB307-0294)).